A 142-amino-acid chain; its full sequence is Hemoglobin subunit alpha (142 aa).

Residue serine 1 is modified to N-acetylserine. Positions 1 to 142 constitute a Globin domain; the sequence is SLSDKDKNTV…LALALSERYR (142 aa). Histidine 59 is an O2 binding site. Histidine 88 provides a ligand contact to heme b.

The protein belongs to the globin family. Heterotetramer of two alpha chains and two beta chains. Can form polymers. Red blood cells.

In terms of biological role, involved in oxygen transport from gills to the various peripheral tissues. The polypeptide is Hemoglobin subunit alpha (hba) (Chelidonichthys kumu (Bluefin gurnard)).